Consider the following 516-residue polypeptide: Threonine synthase 2, chloroplastic (516 aa).

The transit peptide at 1–33 directs the protein to the chloroplast; sequence MASFSLPHSATYFPSHSETSLKPHSAASFTVRC. Residues 1-37 show a composition bias toward polar residues; that stretch reads MASFSLPHSATYFPSHSETSLKPHSAASFTVRCTSAS. Positions 1–55 are disordered; that stretch reads MASFSLPHSATYFPSHSETSLKPHSAASFTVRCTSASPAVPPQTPQKPRRSPDEN. S-adenosyl-L-methionine contacts are provided by residues 133–135, 156–158, N163, L164, K172, and N178; these read PYG and SAF. The residue at position 194 (K194) is an N6-(pyridoxal phosphate)lysine. Pyridoxal 5'-phosphate-binding positions include 326-330 and T464; that span reads GNLGN.

It belongs to the threonine synthase family. As to quaternary structure, homodimer. Requires pyridoxal 5'-phosphate as cofactor.

The protein localises to the plastid. The protein resides in the chloroplast. The enzyme catalyses O-phospho-L-homoserine + H2O = L-threonine + phosphate. The protein operates within amino-acid biosynthesis; L-threonine biosynthesis; L-threonine from L-aspartate: step 5/5. With respect to regulation, allosterically activated by S-adenosyl-methionine (SAM). Functionally, catalyzes the gamma-elimination of phosphate from L-phosphohomoserine and the beta-addition of water to produce L-threonine. The sequence is that of Threonine synthase 2, chloroplastic (TS2) from Arabidopsis thaliana (Mouse-ear cress).